The sequence spans 354 residues: G-protein coupled estrogen receptor 1 (354 aa).

At 1–40 (MEEQTTSLVWIYVNSTEQLNTSYEYNTTYLIEDSDKYQSY) the chain is on the extracellular side. The chain crosses the membrane as a helical span at residues 41–61 (VIGLFLSCLYTILLFPIGFIG). Residues 62–81 (NILILVVNLNHRGKMAIPDL) are Cytoplasmic-facing. The helical transmembrane segment at 82 to 102 (YFVNLAVADLILVADSLIEVF) threads the bilayer. The Extracellular segment spans residues 103–112 (NLNEKYYDYA). A helical membrane pass occupies residues 113-133 (VLCTFMSLFLQVNMYSSIFFL). A disulfide bridge links Cys-115 with Cys-192. Residues 134–160 (TWMSFDRYIALANSMSSSPLRTMQHAK) lie on the Cytoplasmic side of the membrane. A helical membrane pass occupies residues 161–181 (LSCGLIWMASILATLLPFTIV). The Extracellular portion of the chain corresponds to 182–202 (QTQHRGEVHFCFANVFEIQWL). The chain crosses the membrane as a helical span at residues 203 to 223 (EVTIGFLVPFSIIGLCYSLIG). Topologically, residues 224 to 245 (RILMRSQKHRGLWPRRQKALRM) are cytoplasmic. Residues 246-266 (IVVVVLVFFICWLPENVFISI) traverse the membrane as a helical segment. Over 267 to 292 (QLLQGTADPSQRTATTLRHDYPLTGH) the chain is Extracellular. The helical transmembrane segment at 293–313 (IVNLAAFSNSCLNPIIYSFLG) threads the bilayer. Residues 314-353 (ETFRDKLRLFIKQKASWSVVNRFCHHGLDLHLPVRSEVSE) are Cytoplasmic-facing.

Belongs to the G-protein coupled receptor 1 family. Homodimer. Heterodimer. As to expression, expressed in oocytes (at protein level). Highly expressed in brain, heart, testis and ovary. Weakly expressed in muscle and intestine.

The protein localises to the nucleus. It localises to the cytoplasm. Its subcellular location is the perinuclear region. It is found in the cytoskeleton. The protein resides in the cytoplasmic vesicle membrane. The protein localises to the cell membrane. It localises to the basolateral cell membrane. Its subcellular location is the endoplasmic reticulum membrane. It is found in the early endosome. The protein resides in the recycling endosome. The protein localises to the golgi apparatus. It localises to the trans-Golgi network. Its subcellular location is the golgi apparatus membrane. It is found in the cell projection. The protein resides in the dendrite. The protein localises to the dendritic spine membrane. It localises to the axon. Its subcellular location is the postsynaptic density. It is found in the mitochondrion membrane. Membrane G-protein coupled estrogen receptor that binds to 17-beta-estradiol (E2) with high affinity, leading to rapid and transient activation of numerous intracellular signaling pathways. Plays a role in the embryonic development of sensory and motor neurons. May induce apoptosis and reduce proliferation of brain cells. Involved in maintenance of meiotic arrest in oocytes. The chain is G-protein coupled estrogen receptor 1 (gper1) from Micropogonias undulatus (Atlantic croaker).